Reading from the N-terminus, the 932-residue chain is ER degradation-enhancing alpha-mannosidase-like protein 3 (932 aa).

The signal sequence occupies residues 1–41 (MSEAGGRGCGSPVPQRARWRLVAATAAFCLVSATSVWTAGA). N-linked (GlcNAc...) asparagine glycosylation occurs at Asn-118. Catalysis depends on Glu-146, which acts as the Proton donor. Asn-195 carries N-linked (GlcNAc...) asparagine glycosylation. Asp-293 is an active-site residue. Glu-387 (proton donor) is an active-site residue. Glu-405 is a catalytic residue. Thr-491 is a binding site for Ca(2+). Asn-504 and Asn-511 each carry an N-linked (GlcNAc...) asparagine glycan. Residues 674 to 779 (LSKHKETRGF…KEGSIILDAI (106 aa)) form the PA domain. The segment covering 790–799 (SDKAKDRDPE) has biased composition (basic and acidic residues). A disordered region spans residues 790 to 908 (SDKAKDRDPE…PNVSWGKKVQ (119 aa)). 2 N-linked (GlcNAc...) asparagine glycosylation sites follow: Asn-810 and Asn-814. Residues 812–825 (SQNQSGEQISSSSQ) show a composition bias toward low complexity. Over residues 856–890 (ASISPSEQTSNPTENHETTNLNGECTDLDNQLQEQ) the composition is skewed to polar residues. An N-linked (GlcNAc...) asparagine glycan is attached at Asn-900. The short motif at 929–932 (KDEL) is the Prevents secretion from ER element.

The protein belongs to the glycosyl hydrolase 47 family. Ca(2+) serves as cofactor.

It localises to the endoplasmic reticulum lumen. The enzyme catalyses N(4)-(alpha-D-Man-(1-&gt;2)-alpha-D-Man-(1-&gt;2)-alpha-D-Man-(1-&gt;3)-[alpha-D-Man-(1-&gt;2)-alpha-D-Man-(1-&gt;3)-[alpha-D-Man-(1-&gt;2)-alpha-D-Man-(1-&gt;6)]-alpha-D-Man-(1-&gt;6)]-beta-D-Man-(1-&gt;4)-beta-D-GlcNAc-(1-&gt;4)-beta-D-GlcNAc)-L-asparaginyl-[protein] (N-glucan mannose isomer 9A1,2,3B1,2,3) + 4 H2O = N(4)-(alpha-D-Man-(1-&gt;3)-[alpha-D-Man-(1-&gt;3)-[alpha-D-Man-(1-&gt;6)]-alpha-D-Man-(1-&gt;6)]-beta-D-Man-(1-&gt;4)-beta-D-GlcNAc-(1-&gt;4)-beta-D-GlcNAc)-L-asparaginyl-[protein] (N-glucan mannose isomer 5A1,2) + 4 beta-D-mannose. It carries out the reaction N(4)-(alpha-D-Man-(1-&gt;2)-alpha-D-Man-(1-&gt;2)-alpha-D-Man-(1-&gt;3)-[alpha-D-Man-(1-&gt;3)-[alpha-D-Man-(1-&gt;2)-alpha-D-Man-(1-&gt;6)]-alpha-D-Man-(1-&gt;6)]-beta-D-Man-(1-&gt;4)-beta-D-GlcNAc-(1-&gt;4)-beta-D-GlcNAc)-L-asparaginyl-[protein] (N-glucan mannose isomer 8A1,2,3B1,3) + 3 H2O = N(4)-(alpha-D-Man-(1-&gt;3)-[alpha-D-Man-(1-&gt;3)-[alpha-D-Man-(1-&gt;6)]-alpha-D-Man-(1-&gt;6)]-beta-D-Man-(1-&gt;4)-beta-D-GlcNAc-(1-&gt;4)-beta-D-GlcNAc)-L-asparaginyl-[protein] (N-glucan mannose isomer 5A1,2) + 3 beta-D-mannose. The protein operates within protein modification; protein glycosylation. In terms of biological role, involved in endoplasmic reticulum-associated degradation (ERAD). Accelerates the glycoprotein ERAD by proteasomes, by catalyzing mannose trimming from Man8GlcNAc2 to Man7GlcNAc2 in the N-glycans. May also participate in mannose trimming from all glycoproteins and not just misfolded ones targeted to ERAD. May have alpha 1,2-mannosidase activity. The protein is ER degradation-enhancing alpha-mannosidase-like protein 3 (EDEM3) of Homo sapiens (Human).